The following is a 189-amino-acid chain: Large ribosomal subunit protein uL6 (189 aa).

It belongs to the universal ribosomal protein uL6 family. As to quaternary structure, part of the 50S ribosomal subunit.

Its function is as follows. This protein binds to the 23S rRNA, and is important in its secondary structure. It is located near the subunit interface in the base of the L7/L12 stalk, and near the tRNA binding site of the peptidyltransferase center. This is Large ribosomal subunit protein uL6 from Phocaeicola vulgatus (strain ATCC 8482 / DSM 1447 / JCM 5826 / CCUG 4940 / NBRC 14291 / NCTC 11154) (Bacteroides vulgatus).